The primary structure comprises 224 residues: Phosphoribosylformylglycinamidine synthase subunit PurQ (224 aa).

The Glutamine amidotransferase type-1 domain maps to 3–224 (FGVVVFPGSN…GLLEKVVALA (222 aa)). The active-site Nucleophile is the Cys-86. Catalysis depends on residues His-195 and Glu-197.

In terms of assembly, part of the FGAM synthase complex composed of 1 PurL, 1 PurQ and 2 PurS subunits.

The protein resides in the cytoplasm. The catalysed reaction is N(2)-formyl-N(1)-(5-phospho-beta-D-ribosyl)glycinamide + L-glutamine + ATP + H2O = 2-formamido-N(1)-(5-O-phospho-beta-D-ribosyl)acetamidine + L-glutamate + ADP + phosphate + H(+). It carries out the reaction L-glutamine + H2O = L-glutamate + NH4(+). Its pathway is purine metabolism; IMP biosynthesis via de novo pathway; 5-amino-1-(5-phospho-D-ribosyl)imidazole from N(2)-formyl-N(1)-(5-phospho-D-ribosyl)glycinamide: step 1/2. Functionally, part of the phosphoribosylformylglycinamidine synthase complex involved in the purines biosynthetic pathway. Catalyzes the ATP-dependent conversion of formylglycinamide ribonucleotide (FGAR) and glutamine to yield formylglycinamidine ribonucleotide (FGAM) and glutamate. The FGAM synthase complex is composed of three subunits. PurQ produces an ammonia molecule by converting glutamine to glutamate. PurL transfers the ammonia molecule to FGAR to form FGAM in an ATP-dependent manner. PurS interacts with PurQ and PurL and is thought to assist in the transfer of the ammonia molecule from PurQ to PurL. The protein is Phosphoribosylformylglycinamidine synthase subunit PurQ of Nostoc sp. (strain PCC 7120 / SAG 25.82 / UTEX 2576).